The following is a 287-amino-acid chain: uncharacterized protein (287 aa).

GTP is bound by residues 43 to 50, 90 to 93, and 156 to 159; these read GKTGVGKS, DLPG, and DKAE. Residues 48–138 enclose the G domain; it reads GKSSLCNALF…LTVDEHFYHQ (91 aa).

It to E.coli YfjP and YeeP.

This is an uncharacterized protein from Escherichia coli (strain K12).